A 489-amino-acid chain; its full sequence is Carboxyl-terminal-processing peptidase 1, chloroplastic (489 aa).

Low complexity predominate over residues 1–20 (MRLLLPFSSPLSATSSPSTP). Positions 1 to 27 (MRLLLPFSSPLSATSSPSTPQFIPELP) are disordered. A PDZ domain is found at 189–273 (FSRMSKYDIT…TFVVLKVKHG (85 aa)). Active-site charge relay system residues include S403 and K428.

Belongs to the peptidase S41A family.

It is found in the plastid. It localises to the chloroplast thylakoid lumen. It carries out the reaction The enzyme shows specific recognition of a C-terminal tripeptide, Xaa-Yaa-Zaa, in which Xaa is preferably Ala or Leu, Yaa is preferably Ala or Tyr, and Zaa is preferably Ala, but then cleaves at a variable distance from the C-terminus. A typical cleavage is -Ala-Ala-|-Arg-Ala-Ala-Lys-Glu-Asn-Tyr-Ala-Leu-Ala-Ala.. Protease involved in the C-terminal processing of the chloroplastic D1 protein of photosystem II. This proteolytic processing is necessary to allow the light-driven assembly of the tetranuclear manganese cluster, which is responsible for photosynthetic water oxidation. The protein is Carboxyl-terminal-processing peptidase 1, chloroplastic (CTPA1) of Arabidopsis thaliana (Mouse-ear cress).